The following is a 1040-amino-acid chain: uncharacterized protein (1040 aa).

Residues 403–588 (RLEESSKKGG…YSLIKFLRIK (186 aa)) enclose the Helicase ATP-binding domain. 416-423 (DDMGLGKT) contributes to the ATP binding site. The segment at 746–798 (CSLCMDVVAELLIIVPCGHFLCRECLTHVITSSEDMAKQTSNENISPKCSVCE) adopts an RING-type zinc-finger fold. A Helicase C-terminal domain is found at 866–1032 (KIEKALNAVK…ISRLNTKELS (167 aa)).

Belongs to the SNF2/RAD54 helicase family.

It is found in the nucleus. This is an uncharacterized protein from Schizosaccharomyces pombe (strain 972 / ATCC 24843) (Fission yeast).